The primary structure comprises 518 residues: Fusicoccin H C-9 hydroxylase (518 aa).

A helical transmembrane segment spans residues 12-29 (HLLLISTVIAVLAALIVS). N-linked (GlcNAc...) asparagine glycosylation is found at Asn-81 and Asn-168. Cys-456 lines the heme pocket.

The protein belongs to the cytochrome P450 family. Requires heme as cofactor.

Its subcellular location is the membrane. The protein operates within mycotoxin biosynthesis. Cytochrome P450 monooxygenase; part of the 2 gene clusters that mediate the biosynthesis of fusicoccins, diterpene glucosides that display phytohormone-like activity and function as potent activators of plasma membrane H(+)-ATPases in plants by modifying 14-3-3 proteins and cause the plant disease constriction canker. The first step in the pathway is performed by the fusicoccadiene synthase PaFS that possesses both prenyl transferase and terpene cyclase activity, converting isopentenyl diphosphate and dimethylallyl diphosphate into geranylgeranyl diphosphate (GGDP) and successively converting GGDP into fusicocca-2,10(14)-diene, a precursor for fusicoccin H. The second step is the oxidation at the C-8 position by the cytochrome P450 monooxygenase PaP450-2 to yield fusicocca-2,10(14)-diene-8-beta-ol. The cytochrome P450 monooxygenase PaP450-1 then catalyzes the hydroxylation at the C-16 position to produce fusicocca-2,10(14)-diene-8-beta,16-diol. The dioxygenase fc-dox then catalyzes the 16-oxydation of fusicocca-2,10(14)-diene-8-beta,16-diol to yield an aldehyde (8-beta-hydroxyfusicocca-1,10(14)-dien-16-al). The short-chain dehydrogenase/reductase fc-sdr catalyzes the reduction of the aldehyde to yield fusicocca-1,10(14)-diene-8-beta,16-diol. The next step is the hydroxylation at C-9 performed by the cytochrome P450 monooxygenase PaP450-3 that leads to fusicoccin H aglycon which is glycosylated to fusicoccin H by the O-glycosyltransferase PaGT. Hydroxylation at C-12 by the cytochrome P450 monooxygenase PaP450-4 leads then to the production of fusicoccin Q and is followed by methylation by the O-methyltransferase PaMT to yield fusicoccin P. Fusicoccin P is further converted to fusicoccin J via prenylation by the O-glucose prenyltransferase PaPT. Cytochrome P450 monooxygenase PaP450-5 then performs hydroxylation at C-19 to yield dideacetyl-fusicoccin A which is acetylated to 3'-O-deacetyl-fusicoccin A by the O-acetyltransferase PaAT-2. Finally, a another acetylation by the O-acetyltransferase PaAT-1 yields fusicoccin A. The sequence is that of Fusicoccin H C-9 hydroxylase from Phomopsis amygdali (Fusicoccum amygdali).